A 453-amino-acid chain; its full sequence is Ferruginol synthase (453 aa).

A helical membrane pass occupies residues 15-35; that stretch reads LSKKYGPLMSIHLGSLYTVIV. Cys397 is a heme binding site.

The protein belongs to the cytochrome P450 family. It depends on heme as a cofactor. In terms of tissue distribution, expressed in leaf glandular trichomes.

The protein localises to the membrane. The catalysed reaction is abieta-8,11,13-triene + reduced [NADPH--hemoprotein reductase] + O2 = ferruginol + oxidized [NADPH--hemoprotein reductase] + H2O + H(+). The enzyme catalyses ferruginol + reduced [NADPH--hemoprotein reductase] + O2 = 11-hydroxyferruginol + oxidized [NADPH--hemoprotein reductase] + H2O + H(+). It carries out the reaction miltiradiene + 2 reduced [NADPH--hemoprotein reductase] + 2 O2 = 11-oxomiltiradiene + 2 oxidized [NADPH--hemoprotein reductase] + 3 H2O + 2 H(+). Its pathway is secondary metabolite biosynthesis; terpenoid biosynthesis. Functionally, monooxygenase involved in the biosynthesis of labdane-related diterpenes natural products. Catalyzes the oxidation of abietatriene to produce ferruginol. Ferruginol is an intermediate in the biosynthesis of carnosate, a potent antioxidant. May also convert miltiradiene into 11-oxomiltiradiene. The chain is Ferruginol synthase from Salvia pomifera (Apple sage).